Here is a 276-residue protein sequence, read N- to C-terminus: Rhomboid protease GlpG (276 aa).

6 consecutive transmembrane segments (helical) span residues 94–114 (GPFT…MNVV), 142–162 (ALMH…WYLG), 169–189 (LGSG…GYVQ), 192–212 (FSGP…GYAW), 229–249 (LITF…GMSI), and 250–270 (ANGA…ADTL). Residue serine 201 is the Nucleophile of the active site. The active site involves histidine 254.

Belongs to the peptidase S54 family.

The protein localises to the cell inner membrane. The catalysed reaction is Cleaves type-1 transmembrane domains using a catalytic dyad composed of serine and histidine that are contributed by different transmembrane domains.. Its function is as follows. Rhomboid-type serine protease that catalyzes intramembrane proteolysis. The sequence is that of Rhomboid protease GlpG from Enterobacter sp. (strain 638).